The following is a 178-amino-acid chain: Large ribosomal subunit protein uL6 (178 aa).

The protein belongs to the universal ribosomal protein uL6 family. As to quaternary structure, part of the 50S ribosomal subunit.

This protein binds to the 23S rRNA, and is important in its secondary structure. It is located near the subunit interface in the base of the L7/L12 stalk, and near the tRNA binding site of the peptidyltransferase center. This is Large ribosomal subunit protein uL6 from Enterococcus faecalis (strain ATCC 700802 / V583).